A 957-amino-acid chain; its full sequence is Collagen alpha-1(XXI) chain (957 aa).

An N-terminal signal peptide occupies residues 1–22 (MAHYITFLCMVLVLLLQNSVLA). The VWFA domain occupies 37 to 211 (DLVFILDGSY…KIREVMKQKL (175 aa)). N-linked (GlcNAc...) asparagine glycosylation is present at Asn-62. The region spanning 230–412 (GFDILLGLDV…VQKLRIYCDP (183 aa)) is the Laminin G-like domain. Collagen-like domains are found at residues 448–500 (PGKP…GARG), 501–542 (LPGY…GDKG), and 543–594 (SPGF…SPGA). 2 disordered regions span residues 448–786 (PGKP…KPGR) and 825–938 (GSPG…ICDP). Low complexity-rich tracts occupy residues 451–462 (PGLQGPKGDPGL) and 471–481 (QPGQDGKPGYQ). Basic and acidic residues predominate over residues 507-517 (EPGRDGDKGDR). Composition is skewed to low complexity over residues 618-637 (QKGE…PGMP) and 705-729 (EKGI…IQGH). Collagen-like domains lie at 681–733 (SPGE…HGAK), 734–787 (GERG…PGRE), 825–882 (GSPG…GSQG), and 884–934 (GYPG…GPPG). Basic and acidic residues predominate over residues 732–742 (AKGERGEKGEP). Residues 829 to 838 (IPGPPGPIGP) are compositionally biased toward pro residues. Low complexity predominate over residues 839–874 (EGPRGLPGLPGRDGVPGLVGVPGRPGVRGLKGLPGR). Residues 889-900 (QGPPGPPGPEGP) are compositionally biased toward pro residues.

This sequence belongs to the fibril-associated collagens with interrupted helices (FACIT) family. In terms of tissue distribution, highly expressed in lymph node, jejunum, pancreas, stomach, trachea, testis, uterus and placenta; moderately expressed in brain, colon, lung, prostate, spinal cord, salivary gland and vascular smooth-muscle cells and very weakly expressed in heart, liver, kidney, bone marrow, spleen, thymus, skeletal muscle, adrenal gland and peripheral leukocytes. Expression in heart was higher in the right ventricle and atrium than in the left ventricle and atrium.

The protein localises to the secreted. The protein resides in the extracellular space. It localises to the extracellular matrix. It is found in the cytoplasm. The chain is Collagen alpha-1(XXI) chain (COL21A1) from Homo sapiens (Human).